The following is a 161-amino-acid chain: Aklanonic acid methyl ester cyclase DauD (161 aa).

Gln106 provides a ligand contact to substrate. The interval 137–161 is disordered; sequence WPTPEGWRPCPPPPRRRHDRSTDTP.

Belongs to the polyketide cyclase DnrD family. As to quaternary structure, homotetramer.

The enzyme catalyses methyl aklanonate = aklaviketone. It functions in the pathway antibiotic biosynthesis; daunorubicin biosynthesis. The protein operates within antibiotic biosynthesis; carminomycin biosynthesis. Its pathway is antibiotic biosynthesis; rhodomycin biosynthesis. It participates in antibiotic biosynthesis; aclacinomycin biosynthesis. In terms of biological role, involved in the biosynthesis of aklavinone which is an important precursor common to the formation of the clinically significant anthracyclines such as carminomycin, daunorubicin (daunomycin), rhodomycin, aclacinomycin T (aklavin) and aclacinomycin A (aclarubicin). These compounds are aromatic polyketide antibiotics that exhibit high cytotoxicity and are widely applied in the chemotherapy of a variety of cancers. Catalyzes the cyclization of aklanonic acid methyl ester to yield aklaviketone. The protein is Aklanonic acid methyl ester cyclase DauD (dauD) of Streptomyces sp. (strain C5).